A 418-amino-acid polypeptide reads, in one-letter code: Flavin-dependent L-tryptophan oxidase VioA (418 aa).

G13 is a binding site for Mg(2+). An FAD-binding site is contributed by S15. Position 16 (G16) interacts with Mg(2+). 3 residues coordinate FAD: D38, R46, and R64. Residues R64 and H163 each contribute to the substrate site. L208 is an FAD binding site. Residue A240 participates in Mg(2+) binding. A substrate-binding site is contributed by Y309. FAD is bound at residue M398.

Belongs to the flavin monoamine oxidase family. In terms of assembly, homodimer. FAD serves as cofactor. Mg(2+) is required as a cofactor.

It catalyses the reaction L-tryptophan + O2 = 2-iminio-3-(indol-3-yl)propanoate + H2O2. The enzyme catalyses 7-chloro-L-tryptophan + O2 = 3-(7-chloroindol-3-yl)-2-iminopropanoate + H2O2. The protein operates within pigment biosynthesis; violacein biosynthesis. In terms of biological role, the enzyme generates the imine form of indole 3-pyruvate (IPA) from L-tryptophan (L-Trp), with concomitant two-electron reduction of O(2) to H(2)O(2). The polypeptide is Flavin-dependent L-tryptophan oxidase VioA (vioA) (Chromobacterium violaceum (strain ATCC 12472 / DSM 30191 / JCM 1249 / CCUG 213 / NBRC 12614 / NCIMB 9131 / NCTC 9757 / MK)).